Reading from the N-terminus, the 37-residue chain is Photosystem II reaction center protein M (37 aa).

A helical membrane pass occupies residues Ala7 to Val27.

Belongs to the PsbM family. PSII is composed of 1 copy each of membrane proteins PsbA, PsbB, PsbC, PsbD, PsbE, PsbF, PsbH, PsbI, PsbJ, PsbK, PsbL, PsbM, PsbT, PsbX, PsbY, PsbZ, Psb30/Ycf12, at least 3 peripheral proteins of the oxygen-evolving complex and a large number of cofactors. It forms dimeric complexes.

The protein localises to the plastid. It localises to the chloroplast thylakoid membrane. In terms of biological role, one of the components of the core complex of photosystem II (PSII). PSII is a light-driven water:plastoquinone oxidoreductase that uses light energy to abstract electrons from H(2)O, generating O(2) and a proton gradient subsequently used for ATP formation. It consists of a core antenna complex that captures photons, and an electron transfer chain that converts photonic excitation into a charge separation. This subunit is found at the monomer-monomer interface. This Pinus thunbergii (Japanese black pine) protein is Photosystem II reaction center protein M.